Here is a 281-residue protein sequence, read N- to C-terminus: Insecticidal crystal toxin protein (281 aa).

9 antigenic epitope regions span residues 54–78, 91–104, 108–116, 131–148, 160–172, 189–196, 208–216, 221–236, and 247–256; these read NYSH…VYTF, IYTH…AVKA, GTASKVVQG, FKIT…FIRI, AVIN…VAEL, KYKDFQYL, QNISLVFNR, TNTT…LPIT, and KLETVQQIIN.

Belongs to the delta endotoxin family.

In terms of biological role, promotes colloidosmotic lysis by binding to the midgut epithelial cells of insects. Active against Mamestra brassicae. This is Insecticidal crystal toxin protein from Bacillus thuringiensis subsp. kurstaki.